A 955-amino-acid polypeptide reads, in one-letter code: UPF0182 protein tll1193 (955 aa).

9 helical membrane-spanning segments follow: residues V6 to L26, W53 to C73, G98 to A118, W163 to F183, L186 to L206, L240 to A260, L280 to Y300, L324 to I344, and G354 to V374.

The protein belongs to the UPF0182 family.

Its subcellular location is the cell membrane. In Thermosynechococcus vestitus (strain NIES-2133 / IAM M-273 / BP-1), this protein is UPF0182 protein tll1193.